A 156-amino-acid polypeptide reads, in one-letter code: MKLQLIAVGTRMPDWVTRGFEEYQRRFPRDMALELIEIPAGKRGKNADIVRILQKEGEQMLAAIPKGNHIVTLDLPGKNWTTPELASAMNKWQLDGRDVSLLVGGPEGLAPACKEAAHQSWCLSALTLPHPLVRIVVAESLYRAWSVNTNHPYHRE.

S-adenosyl-L-methionine contacts are provided by residues L73, G104, and 123-128; that span reads LSALTL.

Belongs to the RNA methyltransferase RlmH family. As to quaternary structure, homodimer.

It localises to the cytoplasm. The enzyme catalyses pseudouridine(1915) in 23S rRNA + S-adenosyl-L-methionine = N(3)-methylpseudouridine(1915) in 23S rRNA + S-adenosyl-L-homocysteine + H(+). Specifically methylates the pseudouridine at position 1915 (m3Psi1915) in 23S rRNA. This chain is Ribosomal RNA large subunit methyltransferase H, found in Shewanella oneidensis (strain ATCC 700550 / JCM 31522 / CIP 106686 / LMG 19005 / NCIMB 14063 / MR-1).